Consider the following 244-residue polypeptide: Phosphoadenosine 5'-phosphosulfate reductase (244 aa).

Cysteine 239 (nucleophile; cysteine thiosulfonate intermediate) is an active-site residue.

Belongs to the PAPS reductase family. CysH subfamily.

It localises to the cytoplasm. The enzyme catalyses [thioredoxin]-disulfide + sulfite + adenosine 3',5'-bisphosphate + 2 H(+) = [thioredoxin]-dithiol + 3'-phosphoadenylyl sulfate. It participates in sulfur metabolism; hydrogen sulfide biosynthesis; sulfite from sulfate: step 3/3. In terms of biological role, catalyzes the formation of sulfite from phosphoadenosine 5'-phosphosulfate (PAPS) using thioredoxin as an electron donor. This Escherichia coli O6:K15:H31 (strain 536 / UPEC) protein is Phosphoadenosine 5'-phosphosulfate reductase.